The chain runs to 333 residues: GTPase Obg (333 aa).

The 159-residue stretch at 1–159 folds into the Obg domain; that stretch reads MKFIDQTIIQ…RDIQLELILI (159 aa). The region spanning 160–332 is the OBG-type G domain; the sequence is ADVGTLGMPN…LCSDIAFYLQ (173 aa). GTP contacts are provided by residues 166-173, 191-195, 212-215, 282-285, and 313-315; these read GMPNAGKS, FTTLN, DIPG, NKID, and SSI. Residues S173 and T193 each coordinate Mg(2+).

This sequence belongs to the TRAFAC class OBG-HflX-like GTPase superfamily. OBG GTPase family. Monomer. Mg(2+) serves as cofactor.

Its subcellular location is the cytoplasm. Functionally, an essential GTPase which binds GTP, GDP and possibly (p)ppGpp with moderate affinity, with high nucleotide exchange rates and a fairly low GTP hydrolysis rate. Plays a role in control of the cell cycle, stress response, ribosome biogenesis and in those bacteria that undergo differentiation, in morphogenesis control. This is GTPase Obg from Buchnera aphidicola subsp. Schizaphis graminum (strain Sg).